The sequence spans 233 residues: MSQDSFKQYLLSEFNIQFNNETLLLEALTQRNYLNEHPDEPGRDYQRLEFLGDSVMQVSVAEYLFKRYPNWHEGQLTEMRIAMVQTRSFAHFSRVAHLNEGIRLGKGEEMSGARDRDSLLEDIWEAFIGALYLDQGFEAVRKFLDQTLFAAVDTDFFDRFIDFKSRLQEKLQKNGAVDIDYRTENEQQLSHNAQLFEASVSVDDHELARGTGKSIKDAEKAAARAALKLLEEK.

The 130-residue stretch at 7–136 (KQYLLSEFNI…FIGALYLDQG (130 aa)) folds into the RNase III domain. Glutamate 49 lines the Mg(2+) pocket. Aspartate 53 is an active-site residue. Residues aspartate 122 and glutamate 125 each contribute to the Mg(2+) site. Glutamate 125 is a catalytic residue. Residues 162-232 (DFKSRLQEKL…ARAALKLLEE (71 aa)) enclose the DRBM domain.

It belongs to the ribonuclease III family. In terms of assembly, homodimer. Mg(2+) serves as cofactor.

Its subcellular location is the cytoplasm. It catalyses the reaction Endonucleolytic cleavage to 5'-phosphomonoester.. In terms of biological role, digests double-stranded RNA. Involved in the processing of primary rRNA transcript to yield the immediate precursors to the large and small rRNAs (23S and 16S). Processes some mRNAs, and tRNAs when they are encoded in the rRNA operon. Processes pre-crRNA and tracrRNA of type II CRISPR loci if present in the organism. The protein is Ribonuclease 3 of Leuconostoc citreum (strain KM20).